The chain runs to 273 residues: Putative pyruvate, phosphate dikinase regulatory protein (273 aa).

Residue 149–156 coordinates ADP; that stretch reads GPSRTSKT.

Belongs to the pyruvate, phosphate/water dikinase regulatory protein family. PDRP subfamily.

The enzyme catalyses N(tele)-phospho-L-histidyl/L-threonyl-[pyruvate, phosphate dikinase] + ADP = N(tele)-phospho-L-histidyl/O-phospho-L-threonyl-[pyruvate, phosphate dikinase] + AMP + H(+). It catalyses the reaction N(tele)-phospho-L-histidyl/O-phospho-L-threonyl-[pyruvate, phosphate dikinase] + phosphate + H(+) = N(tele)-phospho-L-histidyl/L-threonyl-[pyruvate, phosphate dikinase] + diphosphate. In terms of biological role, bifunctional serine/threonine kinase and phosphorylase involved in the regulation of the pyruvate, phosphate dikinase (PPDK) by catalyzing its phosphorylation/dephosphorylation. The protein is Putative pyruvate, phosphate dikinase regulatory protein of Rickettsia canadensis (strain McKiel).